The chain runs to 172 residues: Putative defense protein (172 aa).

A signal peptide spans 1–21 (MKLVVAAVLAMAASRWRRLSA). In terms of domain architecture, Reelin spans 22–172 (HGQVPSSTCA…LRQLDNAVAA (151 aa)).

It belongs to the insect defense protein family. In adults, in hemolymph.

It localises to the secreted. In terms of biological role, may have antimicrobial activity. The polypeptide is Putative defense protein (Locusta migratoria (Migratory locust)).